The chain runs to 75 residues: Small ribosomal subunit protein bS18 (75 aa).

The protein belongs to the bacterial ribosomal protein bS18 family. As to quaternary structure, part of the 30S ribosomal subunit. Forms a tight heterodimer with protein bS6.

Its function is as follows. Binds as a heterodimer with protein bS6 to the central domain of the 16S rRNA, where it helps stabilize the platform of the 30S subunit. The polypeptide is Small ribosomal subunit protein bS18 (Colwellia psychrerythraea (strain 34H / ATCC BAA-681) (Vibrio psychroerythus)).